Reading from the N-terminus, the 346-residue chain is N-acetyl-gamma-glutamyl-phosphate reductase (346 aa).

Residue C150 is part of the active site.

The protein belongs to the NAGSA dehydrogenase family. Type 1 subfamily.

It is found in the cytoplasm. It carries out the reaction N-acetyl-L-glutamate 5-semialdehyde + phosphate + NADP(+) = N-acetyl-L-glutamyl 5-phosphate + NADPH + H(+). Its pathway is amino-acid biosynthesis; L-arginine biosynthesis; N(2)-acetyl-L-ornithine from L-glutamate: step 3/4. In terms of biological role, catalyzes the NADPH-dependent reduction of N-acetyl-5-glutamyl phosphate to yield N-acetyl-L-glutamate 5-semialdehyde. The chain is N-acetyl-gamma-glutamyl-phosphate reductase from Moorella thermoacetica (strain ATCC 39073 / JCM 9320).